The sequence spans 145 residues: Large ribosomal subunit protein uL13 (145 aa).

This sequence belongs to the universal ribosomal protein uL13 family. Part of the 50S ribosomal subunit.

Its function is as follows. This protein is one of the early assembly proteins of the 50S ribosomal subunit, although it is not seen to bind rRNA by itself. It is important during the early stages of 50S assembly. In Bacillus mycoides (strain KBAB4) (Bacillus weihenstephanensis), this protein is Large ribosomal subunit protein uL13.